Consider the following 119-residue polypeptide: Large ribosomal subunit protein uL14 (119 aa).

It belongs to the universal ribosomal protein uL14 family. As to quaternary structure, part of the 50S ribosomal subunit. Forms a cluster with proteins L3 and L19. In the 70S ribosome, L14 and L19 interact and together make contacts with the 16S rRNA in bridges B5 and B8.

Its function is as follows. Binds to 23S rRNA. Forms part of two intersubunit bridges in the 70S ribosome. The polypeptide is Large ribosomal subunit protein uL14 (Anaplasma marginale (strain St. Maries)).